The sequence spans 287 residues: Acetylglutamate kinase (287 aa).

Residues G70 to G71, R92, and N184 contribute to the substrate site.

It belongs to the acetylglutamate kinase family. ArgB subfamily.

It is found in the cytoplasm. It catalyses the reaction N-acetyl-L-glutamate + ATP = N-acetyl-L-glutamyl 5-phosphate + ADP. The protein operates within amino-acid biosynthesis; L-arginine biosynthesis; N(2)-acetyl-L-ornithine from L-glutamate: step 2/4. Its function is as follows. Catalyzes the ATP-dependent phosphorylation of N-acetyl-L-glutamate. The protein is Acetylglutamate kinase of Ruegeria pomeroyi (strain ATCC 700808 / DSM 15171 / DSS-3) (Silicibacter pomeroyi).